Reading from the N-terminus, the 130-residue chain is ATP synthase epsilon chain (130 aa).

This sequence belongs to the ATPase epsilon chain family. F-type ATPases have 2 components, CF(1) - the catalytic core - and CF(0) - the membrane proton channel. CF(1) has five subunits: alpha(3), beta(3), gamma(1), delta(1), epsilon(1). CF(0) has three main subunits: a, b and c.

It is found in the cell inner membrane. Produces ATP from ADP in the presence of a proton gradient across the membrane. This chain is ATP synthase epsilon chain, found in Campylobacter lari (strain RM2100 / D67 / ATCC BAA-1060).